Consider the following 406-residue polypeptide: Glutamyl-tRNA reductase (406 aa).

Residues 49–52 (TCHR), Ser-107, 112–114 (EPQ), and Gln-118 contribute to the substrate site. Residue Cys-50 is the Nucleophile of the active site. 187-192 (GAGETG) contributes to the NADP(+) binding site.

It belongs to the glutamyl-tRNA reductase family. As to quaternary structure, homodimer.

It catalyses the reaction (S)-4-amino-5-oxopentanoate + tRNA(Glu) + NADP(+) = L-glutamyl-tRNA(Glu) + NADPH + H(+). Its pathway is porphyrin-containing compound metabolism; protoporphyrin-IX biosynthesis; 5-aminolevulinate from L-glutamyl-tRNA(Glu): step 1/2. Functionally, catalyzes the NADPH-dependent reduction of glutamyl-tRNA(Glu) to glutamate 1-semialdehyde (GSA). This Thermomicrobium roseum (strain ATCC 27502 / DSM 5159 / P-2) protein is Glutamyl-tRNA reductase.